The primary structure comprises 361 residues: DNA replication and repair protein RecF (361 aa).

Gly-30–Thr-37 contributes to the ATP binding site.

Belongs to the RecF family.

The protein localises to the cytoplasm. The RecF protein is involved in DNA metabolism; it is required for DNA replication and normal SOS inducibility. RecF binds preferentially to single-stranded, linear DNA. It also seems to bind ATP. The chain is DNA replication and repair protein RecF from Yersinia enterocolitica serotype O:8 / biotype 1B (strain NCTC 13174 / 8081).